The chain runs to 837 residues: Ribosome biogenesis ATPase RIX7 (837 aa).

2 disordered regions span residues 36–56 (RSLR…EEDE) and 149–207 (ITST…LKSL). Ser-42 is subject to Phosphoserine. The segment covering 43-56 (QGEEGENNEGEEDE) has biased composition (acidic residues). Residues 149–163 (ITSTWSKSGSVSESI) show a composition bias toward polar residues. The span at 176–192 (KSKKRSKEGTCKVKRQK) shows a compositional bias: basic residues. Position 246 to 253 (246 to 253 (GPPGCGKT)) interacts with ATP. The segment at 443–468 (PTTATDSSEDNMEIDETANGDESSLK) is disordered. The span at 449–461 (SSEDNMEIDETAN) shows a compositional bias: acidic residues. Residue 574–581 (GPPGCGKT) coordinates ATP.

Belongs to the AAA ATPase family.

The protein localises to the nucleus. The protein resides in the nucleolus. In terms of biological role, involved in ribosome biogenesis. Seems to be required for restructuring nucleoplasmic 60S pre-ribosomal particles to make them competent for nuclear export. The chain is Ribosome biogenesis ATPase RIX7 (RIX7) from Saccharomyces cerevisiae (strain ATCC 204508 / S288c) (Baker's yeast).